The primary structure comprises 263 residues: Endonuclease 8 (263 aa).

The Schiff-base intermediate with DNA role is filled by P2. Catalysis depends on E3, which acts as the Proton donor. The active-site Proton donor; for beta-elimination activity is the K53. DNA is bound by residues Q70, R125, and N169. An FPG-type zinc finger spans residues 229 to 263 (KVFHRDGEACERCGGIIEKTTLSSRPFYWCPHCQK). R253 acts as the Proton donor; for delta-elimination activity in catalysis.

Belongs to the FPG family. Requires Zn(2+) as cofactor.

The enzyme catalyses 2'-deoxyribonucleotide-(2'-deoxyribose 5'-phosphate)-2'-deoxyribonucleotide-DNA = a 3'-end 2'-deoxyribonucleotide-(2,3-dehydro-2,3-deoxyribose 5'-phosphate)-DNA + a 5'-end 5'-phospho-2'-deoxyribonucleoside-DNA + H(+). Involved in base excision repair of DNA damaged by oxidation or by mutagenic agents. Acts as a DNA glycosylase that recognizes and removes damaged bases. Has a preference for oxidized pyrimidines, such as thymine glycol, 5,6-dihydrouracil and 5,6-dihydrothymine. Has AP (apurinic/apyrimidinic) lyase activity and introduces nicks in the DNA strand. Cleaves the DNA backbone by beta-delta elimination to generate a single-strand break at the site of the removed base with both 3'- and 5'-phosphates. This chain is Endonuclease 8, found in Salmonella paratyphi B (strain ATCC BAA-1250 / SPB7).